The sequence spans 695 residues: NADPH--cytochrome P450 reductase (695 aa).

Over 1-8 (MAQLDTLD) the chain is Lumenal. A helical transmembrane segment spans residues 9–31 (IVVLVVLLVGSVAYFTKGSYWAV). Residues 32–695 (PKDPYAAANS…SGSYQEDVWS (664 aa)) are Cytoplasmic-facing. A Flavodoxin-like domain is found at 66-221 (CVIFYGSQTG…DFLAWKEPMW (156 aa)). FMN contacts are provided by residues 72 to 77 (SQTGTA), 123 to 126 (ATYG), 169 to 178 (LGNNTYEHYN), and D204. The FAD-binding FR-type domain maps to 277 to 538 (HNPYIAPIVE…HVRHSNFKLP (262 aa)). R296 contributes to the NADP(+) binding site. FAD-binding positions include 451–454 (RYYS), 469–471 (TAV), and 486–489 (GVTT). NADP(+) is bound by residues T552, 614 to 615 (SR), 620 to 624 (KVYVQ), and E656. Position 694 (W694) interacts with FAD.

Belongs to the NADPH--cytochrome P450 reductase family. It in the N-terminal section; belongs to the flavodoxin family. The protein in the C-terminal section; belongs to the flavoprotein pyridine nucleotide cytochrome reductase family. The cofactor is FAD. FMN serves as cofactor.

It localises to the endoplasmic reticulum membrane. The protein localises to the mitochondrion outer membrane. It is found in the cell membrane. It catalyses the reaction 2 oxidized [cytochrome P450] + NADPH = 2 reduced [cytochrome P450] + NADP(+) + H(+). Functionally, this enzyme is required for electron transfer from NADP to cytochrome P450 in microsomes. It can also provide electron transfer to heme oxygenase and cytochrome B5. Involved in ergosterol biosynthesis. This Aspergillus fumigatus (strain ATCC MYA-4609 / CBS 101355 / FGSC A1100 / Af293) (Neosartorya fumigata) protein is NADPH--cytochrome P450 reductase.